Reading from the N-terminus, the 2646-residue chain is Probable inactive serine/threonine-protein kinase roco10 (2646 aa).

7 disordered regions span residues 28-122 (LNYS…LSGG), 138-168 (NIPIPPVPTSPTSTPPNLQTNNNNKQDKDKD), 205-248 (PLFI…VSPS), 281-457 (QQQR…VKQA), 477-516 (MSKLVSQSKEQYKTPSSPYQQSTSSSISSGSGTISGHTSP), 605-656 (TSPN…PHQY), and 882-907 (QSSSSSSSSSISNSSSASSSSSSTPS). Positions 46–56 (PQQNLLENDTL) are enriched in polar residues. 3 stretches are compositionally biased toward low complexity: residues 78–115 (IITTTTTTTTTTAMSPVATTTTSSPTISASPTYITSPS), 147–161 (SPTSTPPNLQTNNNN), and 215–228 (SRNNNGKRNSGGNK). Residues 235-248 (KISSTSAAGDVSPS) are compositionally biased toward polar residues. Composition is skewed to low complexity over residues 285 to 297 (NGNNNNNNNNNNN) and 325 to 334 (NNNNNNNNNN). Positions 335–345 (KQPQHPMNGNH) are enriched in polar residues. Positions 346–394 (SPSNGTSGSLSMSGSGIDNGGNNNNNSNTHGSSSNQSSGVTSPIIQSTS) are enriched in low complexity. Polar residues-rich tracts occupy residues 402–416 (GLNSDSQMPLSSSPT) and 428–443 (TSASAVSSQNRSPLMN). Composition is skewed to low complexity over residues 444 to 454 (STGVSSSSSGV), 491 to 516 (PSSPYQQSTSSSISSGSGTISGHTSP), 605 to 627 (TSPNLSSSLSSSSSSGSSGNSSP), 634 to 651 (QQQQQPQPTTTTTTNTNT), and 883 to 907 (SSSSSSSSSISNSSSASSSSSSTPS). The Rho-GAP domain occupies 585–807 (SSISPISTAA…MFIQQADILF (223 aa)). LRR repeat units follow at residues 968–987 (QKLDMFSLELESLPNEIKQL), 989–1011 (DLQELNLNRNKFKLLPGDLARLT), 1012–1033 (SLRTICIEENNLTEISSEMADF), 1040–1061 (NLENVTLSSNRLVVLPPLYTWL), 1062–1083 (KLKTLNISNNYLTKLPIDIFQI), 1085–1108 (TLEVLRVSNNDLDDNGIPKICTST), 1109–1131 (KLRSLDLRKNHLTSIPEGIINLV), 1132–1154 (ELQVLTLADNQISHLTSDIQKLT), 1155–1176 (SLTELNLNGNQIQSLPPQLLLL), 1178–1199 (NLKKLYLDNNQLQSISSAIHRM), 1201–1222 (SLIELRLTNNNISRLPPGIVAL), 1224–1247 (KLNSLELTGNKPLKDNIPEKYIQK), 1248–1270 (GKEGIFSFFSETMRTNVPCYRTR), 1271–1298 (IIMLGDKSTGKSNLIKCLKKLPKSSFSS), and 1303–1327 (LPSLNNLNSNNSNNSGNSKTNILDI). Residues 1262–1474 (TNVPCYRTRI…RDIKQMIAKN (213 aa)) form the Roc domain. Disordered regions lie at residues 1293–1317 (KSSFSSSSSNLPSLNNLNSNNSNNS), 1651–1670 (NNNNSNGNNVGRGRSGSRSM), and 1957–2026 (NNSS…KEKE). Residues 1651–1669 (NNNNSNGNNVGRGRSGSRS) are compositionally biased toward low complexity. Residues 1966–1975 (PIASSRSNPK) show a composition bias toward polar residues. Residues 1983–1996 (NLIQSNNNDNNNSL) are compositionally biased toward low complexity. The segment covering 1997-2026 (SKKDLKELAKQNKEKEKEKEKDKDKEKEKE) has biased composition (basic and acidic residues). The Protein kinase domain maps to 2049-2342 (FSICHFIKEI…PSKIISQLYT (294 aa)). Residues 2055-2063 (IKEIDYREI) and Lys2094 each bind ATP. One can recognise an RGS domain in the interval 2412 to 2536 (MVVLNNKQST…FTVPTTNKNG (125 aa)).

It belongs to the protein kinase superfamily. TKL Ser/Thr protein kinase family. ROCO subfamily.

This chain is Probable inactive serine/threonine-protein kinase roco10 (roco10), found in Dictyostelium discoideum (Social amoeba).